A 79-amino-acid chain; its full sequence is NAD(P)H-quinone oxidoreductase subunit L (79 aa).

2 helical membrane-spanning segments follow: residues 10-30 (IIIA…IPAV) and 48-68 (GFMY…SPFL).

Belongs to the complex I NdhL subunit family. NDH-1 can be composed of about 15 different subunits; different subcomplexes with different compositions have been identified which probably have different functions.

Its subcellular location is the cellular thylakoid membrane. The enzyme catalyses a plastoquinone + NADH + (n+1) H(+)(in) = a plastoquinol + NAD(+) + n H(+)(out). It carries out the reaction a plastoquinone + NADPH + (n+1) H(+)(in) = a plastoquinol + NADP(+) + n H(+)(out). In terms of biological role, NDH-1 shuttles electrons from an unknown electron donor, via FMN and iron-sulfur (Fe-S) centers, to quinones in the respiratory and/or the photosynthetic chain. The immediate electron acceptor for the enzyme in this species is believed to be plastoquinone. Couples the redox reaction to proton translocation, and thus conserves the redox energy in a proton gradient. Cyanobacterial NDH-1 also plays a role in inorganic carbon-concentration. The protein is NAD(P)H-quinone oxidoreductase subunit L of Microcystis aeruginosa (strain NIES-843 / IAM M-2473).